A 507-amino-acid polypeptide reads, in one-letter code: Serine/threonine-protein kinase BSK11 (507 aa).

Gly2 carries N-myristoyl glycine lipidation. The span at 16 to 26 shows a compositional bias: basic and acidic residues; that stretch reads DKKITSDDLSG. Residues 16–44 are disordered; the sequence is DKKITSDDLSGRRGKGAKRGNRHRHANIN. Over residues 27 to 41 the composition is skewed to basic residues; that stretch reads RRGKGAKRGNRHRHA. Residues 75 to 332 enclose the Protein kinase domain; the sequence is NAVVSVCSDQ…GDIISVITTL (258 aa). ATP-binding positions include 81–89 and Lys106; that span reads CSDQEPNLV. The Proton acceptor role is filled by Asp200.

The protein belongs to the protein kinase superfamily. Ser/Thr protein kinase family. In terms of assembly, interacts with BRI1, ASK7/BIN2, BSK1, BSK6 and BSK8. Post-translationally, phosphorylated by BRI1, ASK7/BIN2 and ASK9/BIL2.

The protein resides in the cell membrane. It catalyses the reaction L-seryl-[protein] + ATP = O-phospho-L-seryl-[protein] + ADP + H(+). The enzyme catalyses L-threonyl-[protein] + ATP = O-phospho-L-threonyl-[protein] + ADP + H(+). Its function is as follows. Probable serine/threonine kinase that acts as a positive regulator of brassinosteroid (BR) signaling downstream of the receptor kinase BRI1. This Arabidopsis thaliana (Mouse-ear cress) protein is Serine/threonine-protein kinase BSK11.